The following is an 88-amino-acid chain: Small ribosomal subunit protein uS15 (88 aa).

This sequence belongs to the universal ribosomal protein uS15 family. Part of the 30S ribosomal subunit. Forms a bridge to the 50S subunit in the 70S ribosome, contacting the 23S rRNA.

In terms of biological role, one of the primary rRNA binding proteins, it binds directly to 16S rRNA where it helps nucleate assembly of the platform of the 30S subunit by binding and bridging several RNA helices of the 16S rRNA. Functionally, forms an intersubunit bridge (bridge B4) with the 23S rRNA of the 50S subunit in the ribosome. This chain is Small ribosomal subunit protein uS15, found in Caldanaerobacter subterraneus subsp. tengcongensis (strain DSM 15242 / JCM 11007 / NBRC 100824 / MB4) (Thermoanaerobacter tengcongensis).